Reading from the N-terminus, the 520-residue chain is Transposase for insertion sequence element IS21-like (520 aa).

Residues 13 to 78 (YMWYKVRELQ…KYEEYVRGTL (66 aa)) form the HTH IS21-type domain. An Integrase catalytic domain is found at 136-312 (LPETPYGEYA…VPSEEFAVEK (177 aa)).

Belongs to the transposase IS21/IS408/IS1162 family.

Its function is as follows. Involved in the transposition of the insertion sequence. The protein is Transposase for insertion sequence element IS21-like (tnpA) of Bacteroides fragilis.